Reading from the N-terminus, the 464-residue chain is Trehalose-6-phosphate synthase (464 aa).

Arg10 provides a ligand contact to D-glucose 6-phosphate. 23–24 (GG) contacts UDP-alpha-D-glucose. The D-glucose 6-phosphate site is built by Tyr81 and Asp135. UDP-alpha-D-glucose is bound by residues Arg268 and Lys273. Position 306 (Arg306) interacts with D-glucose 6-phosphate. 371–375 (LVAKE) serves as a coordination point for UDP-alpha-D-glucose.

This sequence belongs to the glycosyltransferase 20 family. As to quaternary structure, homotetramer.

It carries out the reaction D-glucose 6-phosphate + UDP-alpha-D-glucose = alpha,alpha-trehalose 6-phosphate + UDP + H(+). Its pathway is glycan biosynthesis; trehalose biosynthesis. Functionally, probably involved in the osmoprotection via the biosynthesis of trehalose. Catalyzes the transfer of glucose from UDP-alpha-D-glucose (UDP-Glc) to D-glucose 6-phosphate (Glc-6-P) to form trehalose-6-phosphate. Acts with retention of the anomeric configuration of the UDP-sugar donor. This Sinorhizobium fredii (strain NBRC 101917 / NGR234) protein is Trehalose-6-phosphate synthase.